The chain runs to 644 residues: Heat shock protein SSC3, mitochondrial (644 aa).

Belongs to the heat shock protein 70 family.

It is found in the mitochondrion matrix. It localises to the mitochondrion nucleoid. Plays a role in facilitating the assembly of some protein complexes inside the mitochondria. It may initiate the events that lead to refolding of imported precursors in the matrix space. This is Heat shock protein SSC3, mitochondrial (ECM10) from Saccharomyces cerevisiae (strain ATCC 204508 / S288c) (Baker's yeast).